A 563-amino-acid chain; its full sequence is Zinc finger protein 503 (563 aa).

Residues Met1 to Asn10 show a composition bias toward polar residues. Disordered regions lie at residues Met1–Gln48 and Ser101–Ser226. 2 stretches are compositionally biased toward low complexity: residues Ser19–Ser33 and Ser112–Ser122. Positions Ala174–Pro194 are enriched in polar residues. A compositionally biased stretch (basic and acidic residues) spans Gly199 to Cys211. Polar residues predominate over residues Asn212–Ser226. Residues His431 to His459 form a C2H2-type zinc finger.

This sequence belongs to the Elbow/Noc family. Interacts with nlz1.

It is found in the nucleus. Its function is as follows. Required for segmental gene expression during hindbrain development. May function as a transcriptional repressor. This Danio rerio (Zebrafish) protein is Zinc finger protein 503 (znf503).